The sequence spans 100 residues: Large ribosomal subunit protein bL21 (100 aa).

Belongs to the bacterial ribosomal protein bL21 family. Part of the 50S ribosomal subunit. Contacts protein L20.

Its function is as follows. This protein binds to 23S rRNA in the presence of protein L20. This chain is Large ribosomal subunit protein bL21, found in Wolbachia sp. subsp. Drosophila simulans (strain wRi).